The following is a 353-amino-acid chain: Photosystem II D2 protein (353 aa).

At threonine 2 the chain carries N-acetylthreonine. Phosphothreonine is present on threonine 2. The chain crosses the membrane as a helical span at residues 41–61; it reads CAYFALGGWFTGTTFVTSWYT. Histidine 118 provides a ligand contact to chlorophyll a. A helical transmembrane segment spans residues 125 to 141; that stretch reads GFMLRQFELARSVQLRP. 2 residues coordinate pheophytin a: glutamine 130 and asparagine 143. The helical transmembrane segment at 153–166 threads the bilayer; sequence VFVSVFLIYPLGQS. Chlorophyll a is bound at residue histidine 198. The chain crosses the membrane as a helical span at residues 208–228; the sequence is AALLCAIHGATVENTLFEDGD. Histidine 215 and phenylalanine 262 together coordinate a plastoquinone. Histidine 215 contributes to the Fe cation binding site. Fe cation is bound at residue histidine 269. A helical membrane pass occupies residues 279–295; the sequence is GLWMSALGVVGLALNLR.

Belongs to the reaction center PufL/M/PsbA/D family. PSII is composed of 1 copy each of membrane proteins PsbA, PsbB, PsbC, PsbD, PsbE, PsbF, PsbH, PsbI, PsbJ, PsbK, PsbL, PsbM, PsbT, PsbX, PsbY, PsbZ, Psb30/Ycf12, at least 3 peripheral proteins of the oxygen-evolving complex and a large number of cofactors. It forms dimeric complexes. It depends on The D1/D2 heterodimer binds P680, chlorophylls that are the primary electron donor of PSII, and subsequent electron acceptors. It shares a non-heme iron and each subunit binds pheophytin, quinone, additional chlorophylls, carotenoids and lipids. There is also a Cl(-1) ion associated with D1 and D2, which is required for oxygen evolution. The PSII complex binds additional chlorophylls, carotenoids and specific lipids. as a cofactor.

The protein resides in the plastid. The protein localises to the chloroplast thylakoid membrane. The catalysed reaction is 2 a plastoquinone + 4 hnu + 2 H2O = 2 a plastoquinol + O2. In terms of biological role, photosystem II (PSII) is a light-driven water:plastoquinone oxidoreductase that uses light energy to abstract electrons from H(2)O, generating O(2) and a proton gradient subsequently used for ATP formation. It consists of a core antenna complex that captures photons, and an electron transfer chain that converts photonic excitation into a charge separation. The D1/D2 (PsbA/PsbD) reaction center heterodimer binds P680, the primary electron donor of PSII as well as several subsequent electron acceptors. D2 is needed for assembly of a stable PSII complex. In Coffea arabica (Arabian coffee), this protein is Photosystem II D2 protein.